The following is a 52-amino-acid chain: uncharacterized protein (52 aa).

Positions Lys-3–Leu-46 form a coiled coil.

This is an uncharacterized protein from Dictyostelium discoideum (Social amoeba).